A 232-amino-acid polypeptide reads, in one-letter code: Ribosomal RNA small subunit methyltransferase G (232 aa).

S-adenosyl-L-methionine is bound by residues glycine 93, leucine 98, 144 to 145 (VE), and arginine 163.

It belongs to the methyltransferase superfamily. RNA methyltransferase RsmG family.

The protein localises to the cytoplasm. It carries out the reaction guanosine(527) in 16S rRNA + S-adenosyl-L-methionine = N(7)-methylguanosine(527) in 16S rRNA + S-adenosyl-L-homocysteine. In terms of biological role, specifically methylates the N7 position of guanine in position 527 of 16S rRNA. The polypeptide is Ribosomal RNA small subunit methyltransferase G (Burkholderia pseudomallei (strain 668)).